The following is a 478-amino-acid chain: ATP synthase subunit beta (478 aa).

155 to 162 (GGAGVGKT) lines the ATP pocket.

Belongs to the ATPase alpha/beta chains family. As to quaternary structure, F-type ATPases have 2 components, CF(1) - the catalytic core - and CF(0) - the membrane proton channel. CF(1) has five subunits: alpha(3), beta(3), gamma(1), delta(1), epsilon(1). CF(0) has three main subunits: a(1), b(2) and c(9-12). The alpha and beta chains form an alternating ring which encloses part of the gamma chain. CF(1) is attached to CF(0) by a central stalk formed by the gamma and epsilon chains, while a peripheral stalk is formed by the delta and b chains.

The protein resides in the cell inner membrane. It catalyses the reaction ATP + H2O + 4 H(+)(in) = ADP + phosphate + 5 H(+)(out). In terms of biological role, produces ATP from ADP in the presence of a proton gradient across the membrane. The catalytic sites are hosted primarily by the beta subunits. In Fuscovulum blasticum (Rhodobacter blasticus), this protein is ATP synthase subunit beta.